The chain runs to 876 residues: Alanine--tRNA ligase (876 aa).

Residue Lys-74 is modified to N6-acetyllysine. Residues His-564, His-568, Cys-666, and His-670 each contribute to the Zn(2+) site.

Belongs to the class-II aminoacyl-tRNA synthetase family. As to quaternary structure, homotetramer. It depends on Zn(2+) as a cofactor.

It is found in the cytoplasm. It carries out the reaction tRNA(Ala) + L-alanine + ATP = L-alanyl-tRNA(Ala) + AMP + diphosphate. Its function is as follows. Catalyzes the attachment of alanine to tRNA(Ala) in a two-step reaction: alanine is first activated by ATP to form Ala-AMP and then transferred to the acceptor end of tRNA(Ala). Also edits incorrectly charged Ser-tRNA(Ala) and Gly-tRNA(Ala) via its editing domain. This is Alanine--tRNA ligase from Escherichia coli O1:K1 / APEC.